Consider the following 370-residue polypeptide: Protein maelstrom 2 (370 aa).

Residues 2-68 (AQNKPNAFMA…VLERESKTER (67 aa)) constitute a DNA-binding region (HMG box).

The protein belongs to the maelstrom family.

Its subcellular location is the cytoplasm. It is found in the nucleus. Functionally, involved both in the piRNA and miRNA metabolic processes. As a component of the meiotic nuage, plays a central role during oogenesis by repressing transposable elements and preventing their mobilization, which is essential for the germline integrity. Repression of transposable elements is mediated via the piRNA metabolic process, which mediates the repression of transposable elements during meiosis by forming complexes composed of piRNAs and Piwi proteins and governs the repression of transposons. As a nuclear component, it is required for proper differentiation in the germline stem cell (GSC) lineage by repressing microRNA-7 (miR-7), thereby acting as an indirect regulator of bag-of-marbles (Bam). Acts by binding to the promoter of miR-7 gene and repressing its expression; miR-7 repression alleviates the Bam repression by miR-7, thereby allowing differentiation in the germline stem cell (GSC) lineage. The protein is Protein maelstrom 2 (mael2) of Drosophila pseudoobscura pseudoobscura (Fruit fly).